Reading from the N-terminus, the 167-residue chain is Probable phospholipid hydroperoxide glutathione peroxidase (167 aa).

Residue Cys-41 is part of the active site.

This sequence belongs to the glutathione peroxidase family.

It localises to the cytoplasm. The catalysed reaction is a hydroperoxy polyunsaturated fatty acid + 2 glutathione = a hydroxy polyunsaturated fatty acid + glutathione disulfide + H2O. Its function is as follows. Protects cells and enzymes from oxidative damage, by catalyzing the reduction of hydrogen peroxide, lipid peroxides and organic hydroperoxide, by glutathione. This is Probable phospholipid hydroperoxide glutathione peroxidase (CSA) from Citrus sinensis (Sweet orange).